Consider the following 553-residue polypeptide: CTP synthase (553 aa).

The interval 1-277 (MPTEPETDYD…DQYVMEELDI (277 aa)) is amidoligase domain. Ser-26 provides a ligand contact to CTP. Ser-26 is a UTP binding site. ATP-binding positions include 27-32 (GLGKGI) and Asp-84. Residues Asp-84 and Glu-152 each coordinate Mg(2+). CTP contacts are provided by residues 159–161 (DIE), 198–203 (KTKPTQ), and Lys-234. Residues 198–203 (KTKPTQ) and Lys-234 each bind UTP. Positions 307–544 (LVGKYDLEDA…LEAVLGDDPH (238 aa)) constitute a Glutamine amidotransferase type-1 domain. An L-glutamine-binding site is contributed by Gly-364. Catalysis depends on Cys-391, which acts as the Nucleophile; for glutamine hydrolysis. L-glutamine is bound by residues 392–395 (LGFQ), Glu-415, and Arg-472. Catalysis depends on residues His-517 and Glu-519.

Belongs to the CTP synthase family. In terms of assembly, homotetramer.

It catalyses the reaction UTP + L-glutamine + ATP + H2O = CTP + L-glutamate + ADP + phosphate + 2 H(+). It carries out the reaction L-glutamine + H2O = L-glutamate + NH4(+). The enzyme catalyses UTP + NH4(+) + ATP = CTP + ADP + phosphate + 2 H(+). The protein operates within pyrimidine metabolism; CTP biosynthesis via de novo pathway; CTP from UDP: step 2/2. Allosterically activated by GTP, when glutamine is the substrate; GTP has no effect on the reaction when ammonia is the substrate. The allosteric effector GTP functions by stabilizing the protein conformation that binds the tetrahedral intermediate(s) formed during glutamine hydrolysis. Inhibited by the product CTP, via allosteric rather than competitive inhibition. In terms of biological role, catalyzes the ATP-dependent amination of UTP to CTP with either L-glutamine or ammonia as the source of nitrogen. Regulates intracellular CTP levels through interactions with the four ribonucleotide triphosphates. This Haloarcula marismortui (strain ATCC 43049 / DSM 3752 / JCM 8966 / VKM B-1809) (Halobacterium marismortui) protein is CTP synthase.